We begin with the raw amino-acid sequence, 554 residues long: ATP synthase subunit alpha (554 aa).

172 to 179 is an ATP binding site; that stretch reads GDRKTGKT. A disordered region spans residues 528–554; that stretch reads LDEEELEKESVKVKKPAPEKKAKKEQK. The segment covering 535–554 has biased composition (basic and acidic residues); it reads KESVKVKKPAPEKKAKKEQK.

It belongs to the ATPase alpha/beta chains family. F-type ATPases have 2 components, CF(1) - the catalytic core - and CF(0) - the membrane proton channel. CF(1) has five subunits: alpha(3), beta(3), gamma(1), delta(1), epsilon(1). CF(0) has three main subunits: a(1), b(2) and c(9-12). The alpha and beta chains form an alternating ring which encloses part of the gamma chain. CF(1) is attached to CF(0) by a central stalk formed by the gamma and epsilon chains, while a peripheral stalk is formed by the delta and b chains.

It is found in the cell membrane. It catalyses the reaction ATP + H2O + 4 H(+)(in) = ADP + phosphate + 5 H(+)(out). Produces ATP from ADP in the presence of a proton gradient across the membrane. The alpha chain is a regulatory subunit. The sequence is that of ATP synthase subunit alpha from Mycolicibacterium paratuberculosis (strain ATCC BAA-968 / K-10) (Mycobacterium paratuberculosis).